We begin with the raw amino-acid sequence, 130 residues long: Small ribosomal subunit protein uS9 (130 aa).

It belongs to the universal ribosomal protein uS9 family.

The polypeptide is Small ribosomal subunit protein uS9 (Herminiimonas arsenicoxydans).